We begin with the raw amino-acid sequence, 167 residues long: Probable phospholipid hydroperoxide glutathione peroxidase (167 aa).

The active site involves C41.

The protein belongs to the glutathione peroxidase family.

The protein localises to the cytoplasm. The catalysed reaction is a hydroperoxy polyunsaturated fatty acid + 2 glutathione = a hydroxy polyunsaturated fatty acid + glutathione disulfide + H2O. Functionally, protects cells and enzymes from oxidative damage, by catalyzing the reduction of hydrogen peroxide, lipid peroxides and organic hydroperoxide, by glutathione. This is Probable phospholipid hydroperoxide glutathione peroxidase (CSA) from Citrus sinensis (Sweet orange).